A 612-amino-acid polypeptide reads, in one-letter code: Dihydroxy-acid dehydratase (612 aa).

Aspartate 81 provides a ligand contact to Mg(2+). Cysteine 122 is a binding site for [2Fe-2S] cluster. 2 residues coordinate Mg(2+): aspartate 123 and lysine 124. Lysine 124 bears the N6-carboxylysine mark. Cysteine 193 contributes to the [2Fe-2S] cluster binding site. Glutamate 489 contacts Mg(2+). Residue serine 515 is the Proton acceptor of the active site.

This sequence belongs to the IlvD/Edd family. In terms of assembly, homodimer. It depends on [2Fe-2S] cluster as a cofactor. Requires Mg(2+) as cofactor.

It catalyses the reaction (2R)-2,3-dihydroxy-3-methylbutanoate = 3-methyl-2-oxobutanoate + H2O. The enzyme catalyses (2R,3R)-2,3-dihydroxy-3-methylpentanoate = (S)-3-methyl-2-oxopentanoate + H2O. The protein operates within amino-acid biosynthesis; L-isoleucine biosynthesis; L-isoleucine from 2-oxobutanoate: step 3/4. It functions in the pathway amino-acid biosynthesis; L-valine biosynthesis; L-valine from pyruvate: step 3/4. Functions in the biosynthesis of branched-chain amino acids. Catalyzes the dehydration of (2R,3R)-2,3-dihydroxy-3-methylpentanoate (2,3-dihydroxy-3-methylvalerate) into 2-oxo-3-methylpentanoate (2-oxo-3-methylvalerate) and of (2R)-2,3-dihydroxy-3-methylbutanoate (2,3-dihydroxyisovalerate) into 2-oxo-3-methylbutanoate (2-oxoisovalerate), the penultimate precursor to L-isoleucine and L-valine, respectively. The sequence is that of Dihydroxy-acid dehydratase from Pseudomonas paraeruginosa (strain DSM 24068 / PA7) (Pseudomonas aeruginosa (strain PA7)).